Reading from the N-terminus, the 198-residue chain is Probable molybdenum cofactor guanylyltransferase (198 aa).

GTP contacts are provided by residues 9–11 (LAG), K22, D66, and D95. Position 95 (D95) interacts with Mg(2+).

This sequence belongs to the MobA family. Mg(2+) is required as a cofactor.

The protein resides in the cytoplasm. The enzyme catalyses Mo-molybdopterin + GTP + H(+) = Mo-molybdopterin guanine dinucleotide + diphosphate. In terms of biological role, transfers a GMP moiety from GTP to Mo-molybdopterin (Mo-MPT) cofactor (Moco or molybdenum cofactor) to form Mo-molybdopterin guanine dinucleotide (Mo-MGD) cofactor. The polypeptide is Probable molybdenum cofactor guanylyltransferase (Clostridium perfringens (strain SM101 / Type A)).